Consider the following 169-residue polypeptide: Cytochrome c oxidase subunit 4 isoform 1, mitochondrial (169 aa).

A mitochondrion-targeting transit peptide spans 1 to 22 (MLATRVFSLVGKRAISTSVCVR). Residues 23–98 (AHESVVKSED…SFAEMNRGSN (76 aa)) lie on the Mitochondrial matrix side of the membrane. Position 29 is an N6-acetyllysine; alternate (lysine 29). Lysine 29 is subject to N6-succinyllysine; alternate. Lysine 53 is subject to N6-acetyllysine. Serine 56 and serine 58 each carry phosphoserine. At lysine 60 the chain carries N6-acetyllysine; alternate. Position 60 is an N6-succinyllysine; alternate (lysine 60). Lysine 67 bears the N6-acetyllysine mark. The helical transmembrane segment at 99 to 124 (EWKTVVGGAMFFIGFTALVIMWQKHY) threads the bilayer. The Mitochondrial intermembrane portion of the chain corresponds to 125 to 169 (VYGPLPQSFDKEWVAKQTKRMLDMKVNPIQGLASKWDYEKNEWKK).

This sequence belongs to the cytochrome c oxidase IV family. As to quaternary structure, component of the cytochrome c oxidase (complex IV, CIV), a multisubunit enzyme composed of 14 subunits. The complex is composed of a catalytic core of 3 subunits MT-CO1, MT-CO2 and MT-CO3, encoded in the mitochondrial DNA, and 11 supernumerary subunits COX4I1 (or COX4I2), COX5A, COX5B, COX6A1 (or COX6A2), COX6B1 (or COX6B2), COX6C, COX7A2 (or COX7A1), COX7B, COX7C, COX8A and NDUFA4, which are encoded in the nuclear genome. The complex exists as a monomer or a dimer and forms supercomplexes (SCs) in the inner mitochondrial membrane with NADH-ubiquinone oxidoreductase (complex I, CI) and ubiquinol-cytochrome c oxidoreductase (cytochrome b-c1 complex, complex III, CIII), resulting in different assemblies (supercomplex SCI(1)III(2)IV(1) and megacomplex MCI(2)III(2)IV(2)). Interacts with AFG1L. Interacts with PHB2; the interaction decreases in absence of SPHK2. Interacts with ABCB7; this interaction allows the regulation of cellular iron homeostasis and cellular reactive oxygen species (ROS) levels in cardiomyocytes. Interacts with FLVCR2; this interaction occurs in the absence of heme and is disrupted upon heme binding. Interacts with IRGC. As to expression, ubiquitous.

It localises to the mitochondrion inner membrane. It participates in energy metabolism; oxidative phosphorylation. In terms of biological role, component of the cytochrome c oxidase, the last enzyme in the mitochondrial electron transport chain which drives oxidative phosphorylation. The respiratory chain contains 3 multisubunit complexes succinate dehydrogenase (complex II, CII), ubiquinol-cytochrome c oxidoreductase (cytochrome b-c1 complex, complex III, CIII) and cytochrome c oxidase (complex IV, CIV), that cooperate to transfer electrons derived from NADH and succinate to molecular oxygen, creating an electrochemical gradient over the inner membrane that drives transmembrane transport and the ATP synthase. Cytochrome c oxidase is the component of the respiratory chain that catalyzes the reduction of oxygen to water. Electrons originating from reduced cytochrome c in the intermembrane space (IMS) are transferred via the dinuclear copper A center (CU(A)) of subunit 2 and heme A of subunit 1 to the active site in subunit 1, a binuclear center (BNC) formed by heme A3 and copper B (CU(B)). The BNC reduces molecular oxygen to 2 water molecules using 4 electrons from cytochrome c in the IMS and 4 protons from the mitochondrial matrix. The chain is Cytochrome c oxidase subunit 4 isoform 1, mitochondrial from Homo sapiens (Human).